We begin with the raw amino-acid sequence, 277 residues long: Caspase-3 (277 aa).

Position 1 is an N-acetylmethionine (methionine 1). Propeptides lie at residues 1 to 9 (MENTENSVD) and 10 to 28 (SKSI…KSVD). The segment covering 1–10 (MENTENSVDS) has biased composition (polar residues). A disordered region spans residues 1–25 (MENTENSVDSKSIKNSEPKIIHGSK). Lysine 11 carries the N6-acetyllysine modification. Residues 11–20 (KSIKNSEPKI) show a composition bias toward basic and acidic residues. A Phosphoserine modification is found at serine 26. Catalysis depends on residues histidine 121 and cysteine 163. Cysteine 163 is modified (S-nitrosocysteine; in inhibited form).

The protein belongs to the peptidase C14A family. As to quaternary structure, heterotetramer that consists of two anti-parallel arranged heterodimers, each one formed by a 17 kDa (p17) and a 12 kDa (p12) subunit. Interacts with BIRC6/bruce. Cleavage by granzyme B, caspase-6, caspase-8 and caspase-10 generates the two active subunits. Additional processing of the propeptides is likely due to the autocatalytic activity of the activated protease. Active heterodimers between the small subunit of caspase-7 protease and the large subunit of caspase-3 also occur and vice versa. Post-translationally, S-nitrosylated on its catalytic site cysteine in unstimulated cell lines and denitrosylated upon activation of the Fas apoptotic pathway, associated with an increase in intracellular caspase activity. Fas therefore activates caspase-3 not only by inducing the cleavage of the caspase zymogen to its active subunits, but also by stimulating the denitrosylation of its active site thiol. In terms of processing, ubiquitinated by BIRC6; this activity is inhibited by DIABLO/SMAC.

It localises to the cytoplasm. It carries out the reaction Strict requirement for an Asp residue at positions P1 and P4. It has a preferred cleavage sequence of Asp-Xaa-Xaa-Asp-|- with a hydrophobic amino-acid residue at P2 and a hydrophilic amino-acid residue at P3, although Val or Ala are also accepted at this position.. With respect to regulation, inhibited by BIRC6; following inhibition of BIRC6-caspase binding by DIABLO/SMAC, BIRC6 is subjected to caspase cleavage, leading to an increase in active caspases. Involved in the activation cascade of caspases responsible for apoptosis execution. At the onset of apoptosis, it proteolytically cleaves poly(ADP-ribose) polymerase PARP1 at a '216-Asp-|-Gly-217' bond. Cleaves and activates sterol regulatory element binding proteins (SREBPs) between the basic helix-loop-helix leucine zipper domain and the membrane attachment domain. Cleaves and activates caspase-6, -7 and -9 (CASP6, CASP7 and CASP9, respectively). Cleaves and inactivates interleukin-18 (IL18). Triggers cell adhesion in sympathetic neurons through RET cleavage. Cleaves IL-1 beta between an Asp and an Ala, releasing the mature cytokine which is involved in a variety of inflammatory processes. Cleaves and inhibits serine/threonine-protein kinase AKT1 in response to oxidative stress. Acts as an inhibitor of type I interferon production during virus-induced apoptosis by mediating cleavage of antiviral proteins CGAS, IRF3 and MAVS, thereby preventing cytokine overproduction. Also involved in pyroptosis by mediating cleavage and activation of gasdermin-E (GSDME). Cleaves XRCC4 and phospholipid scramblase proteins XKR4, XKR8 and XKR9, leading to promote phosphatidylserine exposure on apoptotic cell surface. Cleaves BIRC6 following inhibition of BIRC6-caspase binding by DIABLO/SMAC. This is Caspase-3 (CASP3) from Saimiri boliviensis boliviensis (Bolivian squirrel monkey).